The following is a 303-amino-acid chain: Taste receptor type 2 member 2 (303 aa).

Residues 1 to 10 are Extracellular-facing; it reads MALSFSAILH. Residues 11 to 31 form a helical membrane-spanning segment; the sequence is IIMMSAEFFTGITVNGFLIIV. Residues 32–56 are Cytoplasmic-facing; that stretch reads NCNELIKHRKLMPIQILLMCIGMSR. Residues 57-77 form a helical membrane-spanning segment; sequence FGLQMVLMVQSFFSVFFPLLY. At 78-79 the chain is on the extracellular side; sequence VK. A helical transmembrane segment spans residues 80–100; sequence IIYGAAMMFLWMFFSSISLWF. The Cytoplasmic segment spans residues 101 to 102; sequence AT. A helical membrane pass occupies residues 103 to 123; the sequence is CLSVFYCLKISGFTQSCFLWL. The Extracellular portion of the chain corresponds to 124 to 129; it reads KFRIPK. Residues 130 to 150 form a helical membrane-spanning segment; that stretch reads LIPWLLLGSVLASVSIASVCI. Topologically, residues 151–185 are cytoplasmic; the sequence is EVDYAKNVEEDALRNTTLKKSKTKIKKISEVLLVN. The helical transmembrane segment at 186–206 threads the bilayer; that stretch reads LALIFPLAIFVMCTSMLLISL. Over 207–234 the chain is Extracellular; it reads YKHTHRMQHGSHGFRNANTEAHINALKT. Residues 235 to 255 form a helical membrane-spanning segment; the sequence is VITFFCFFISYFAAFMTNMTF. Topologically, residues 256–277 are cytoplasmic; it reads SLPYRSHQFFMLKDIMAAYPSG.

The protein belongs to the G-protein coupled receptor T2R family.

It localises to the cell membrane. Functionally, bitter taste receptor that detects natural and synthetic bitter compounds. The chain is Taste receptor type 2 member 2 from Homo sapiens (Human).